A 178-amino-acid polypeptide reads, in one-letter code: Small ribosomal subunit protein uS7c (178 aa).

Positions 137–146 (QKKEEIEKSK) are enriched in basic and acidic residues. The tract at residues 137–178 (QKKEEIEKSKSPVNNNKKFISKNKKSKNKKQKKRLKRKKNIY) is disordered. Over residues 155 to 178 (FISKNKKSKNKKQKKRLKRKKNIY) the composition is skewed to basic residues.

It belongs to the universal ribosomal protein uS7 family. Part of the 30S ribosomal subunit.

The protein localises to the plastid. One of the primary rRNA binding proteins, it binds directly to 16S rRNA where it nucleates assembly of the head domain of the 30S subunit. In Euglena longa (Euglenophycean alga), this protein is Small ribosomal subunit protein uS7c (rps7).